Here is a 441-residue protein sequence, read N- to C-terminus: COBRA-like protein 2 (441 aa).

The N-terminal stretch at 1–28 (MNILFSRFSFLLLFLCSWTSFTFTTTEA) is a signal peptide. N-linked (GlcNAc...) asparagine glycans are attached at residues Asn-37, Asn-162, Asn-170, Asn-209, Asn-234, Asn-249, Asn-314, Asn-329, and Asn-348. Asn-417 is lipidated: GPI-anchor amidated asparagine. The propeptide at 418 to 441 (ASPNIATSPFVILLITFLSVLILM) is removed in mature form.

This sequence belongs to the COBRA family. Expressed in roots, stems, leaves, flowers and siliques.

Its subcellular location is the cell membrane. The chain is COBRA-like protein 2 (COBL2) from Arabidopsis thaliana (Mouse-ear cress).